The chain runs to 765 residues: DNA ligase (765 aa).

Positions 1–34 (MAGDDEDRAVPAAEGAPPPSALPPVSGLDVKAAE) are disordered. NAD(+) is bound by residues 61-65 (DAEYD), 110-111 (SL), and E144. K146 acts as the N6-AMP-lysine intermediate in catalysis. The NAD(+) site is built by R167, E204, K317, and K341. C446, C449, C464, and C470 together coordinate Zn(2+). One can recognise a BRCT domain in the interval 687–765 (ATDSAIAGKT…EDEWLAIAQG (79 aa)).

It belongs to the NAD-dependent DNA ligase family. LigA subfamily. Mg(2+) serves as cofactor. The cofactor is Mn(2+).

It catalyses the reaction NAD(+) + (deoxyribonucleotide)n-3'-hydroxyl + 5'-phospho-(deoxyribonucleotide)m = (deoxyribonucleotide)n+m + AMP + beta-nicotinamide D-nucleotide.. DNA ligase that catalyzes the formation of phosphodiester linkages between 5'-phosphoryl and 3'-hydroxyl groups in double-stranded DNA using NAD as a coenzyme and as the energy source for the reaction. It is essential for DNA replication and repair of damaged DNA. This is DNA ligase from Paracoccus denitrificans (strain Pd 1222).